We begin with the raw amino-acid sequence, 919 residues long: MSYDAYQMRPGQGRDYARQQRQQRSYQLSDDPLRQPGAPYANPAGGYPSSASMNPENPFYAAENPSFQTLAPATSEGHATYTYEEDKIPLTDSADEKYGFSQNGHSTYNLASQSGFPPSTPCGGPSSYSSALGPEDSASQVAWAKRQQAPKRGLTKKIQLTRGHWIVDHPVPTAVKNSVESRWSQGNRTQEFTHMRYTAATCDPDEFTLENGWSLRTSQQYGRDTELLIAITYYNEDRILLARTLHGVMLNIRDICKSKSSKFWRRSAEEGRPGWQRIVVSLIFDGIDPCDKEVLDLLATVGVYQDGVMKRKVDGKDTVAHLFEYTTQLSVDPTPALIQPHADDASNLVPVQMIFCLKQKNSKKINSHRWLFNALGRHLQPELCVLIDAGTKPGHKSLYYLWEAFYNNANLGGACGEIHAMIKNGRKLINPLVAAQNFEYKMSNILDKPLESTFGYVSVLPGAFSAYRFRAIQGRPLQQYFHGDHTLADRLGKKGLHGMDIFTKNMFLAEDRILCFELVAKAGDKWTLTYVKPSKGETDVPEGAAELISQRRRWLNGSFAASIYSLVHFFRIYKSNHGIIRLFFLHIQALYNAIVLLFSWFALANLWLTFSIIIEFLPDELLKNSSHTTLVVFHWINQAAKWIYVFFLVLQFVLALGNRPKGEKPTYIASFIVFGILGLYLIFVSLWLTLKALLETSVSGNIWHTLFNQTTGVLIAALAATFGIYLIASILYADPWHMVTSFPQYMMIAPSFINILNVYAFCNLHDVSWGTKGSDKADALPTVDTKKDKSTEPGTVEEIERHQDDIDETFKAVVSRAVAPFKPAETVEKPTMDDSNKTFRTRLVAFWLLTNGALTVAIENVNGLNTGLTNKQIEQQQSSKQSTYFRIILWATFGLSAFRFIGCLIYWVKRNSTRCFRKT.

Disordered stretches follow at residues 1 to 69 (MSYD…SFQT) and 109 to 134 (NLASQSGFPPSTPCGGPSSYSSALGP). Low complexity predominate over residues 11–30 (GQGRDYARQQRQQRSYQLSD). N-linked (GlcNAc...) asparagine glycans are attached at residues asparagine 187 and asparagine 556. Helical transmembrane passes span 594–614 (IVLLFSWFALANLWLTFSIII), 630–650 (LVVFHWINQAAKWIYVFFLVL), 668–688 (IASFIVFGILGLYLIFVSLWL), 713–733 (VLIAALAATFGIYLIASILYA), 742–762 (FPQYMMIAPSFINILNVYAFC), 843–863 (LVAFWLLTNGALTVAIENVNG), and 887–919 (IILWATFGLSAFRFIGCLIYWVKRNSTRCFRKT).

It belongs to the chitin synthase family. Class III subfamily.

The protein localises to the cell membrane. Its subcellular location is the cytoplasmic vesicle membrane. It catalyses the reaction [(1-&gt;4)-N-acetyl-beta-D-glucosaminyl](n) + UDP-N-acetyl-alpha-D-glucosamine = [(1-&gt;4)-N-acetyl-beta-D-glucosaminyl](n+1) + UDP + H(+). Polymerizes chitin, a structural polymer of the cell wall and septum, by transferring the sugar moiety of UDP-GlcNAc to the non-reducing end of the growing chitin polymer. The protein is Chitin synthase 1 of Mycosarcoma maydis (Corn smut fungus).